The following is a 423-amino-acid chain: UPF0229 protein Psyr_4632 (423 aa).

The interval 65-110 (HHGRGGKQTVVHPGNKEFTTGEHIARPQGGGGGKGPGKAGNSGEGM) is disordered. Gly residues predominate over residues 92 to 107 (QGGGGGKGPGKAGNSG).

The protein belongs to the UPF0229 family.

The chain is UPF0229 protein Psyr_4632 from Pseudomonas syringae pv. syringae (strain B728a).